The sequence spans 206 residues: Probable glutathione peroxidase 3, mitochondrial (206 aa).

The transit peptide at 1–12 directs the protein to the mitochondrion; the sequence is MPRSSRWVNQRA. Cys-80 is an active-site residue.

The protein belongs to the glutathione peroxidase family. In terms of assembly, interacts with ABI1 and ABI2. As to expression, ubiquitous.

The protein resides in the mitochondrion. It carries out the reaction 2 glutathione + H2O2 = glutathione disulfide + 2 H2O. With respect to regulation, the redox states are modulated by H(2)O(2). Its function is as follows. May constitute a glutathione peroxidase-like protective system against oxidative stresses. Involved positively in abscisic acid (ABA) signaling pathway that regulates numerous ABA responses, such as stomatal closure, seed germination and inhibition of vegetative growth. Oxidizes and represses target proteins (e.g. the phosphatase activity of ABI1 and ABI2) when oxidized by H(2)O(2), probably after ABA signaling. Modulates the calcium channel activity in guard cells in response to ABA or H(2)O(2). Confers tolerance to drought stress, by enhancing the ABA-dependent stomatal closure. The chain is Probable glutathione peroxidase 3, mitochondrial (GPX3) from Arabidopsis thaliana (Mouse-ear cress).